We begin with the raw amino-acid sequence, 1887 residues long: Nuclear pore membrane glycoprotein 210 (1887 aa).

The N-terminal stretch at 1 to 26 (MAARGRGLLLLTLSVLLAAGPSAAAA) is a signal peptide. At 27–1808 (KLNIPKVLLP…LFQHFLDSYQ (1782 aa)) the chain is on the perinuclear space side. Residues asparagine 44, asparagine 337, asparagine 405, asparagine 484, asparagine 681, asparagine 801, asparagine 926, asparagine 1039, asparagine 1116, asparagine 1135, asparagine 1362, and asparagine 1441 are each glycosylated (N-linked (GlcNAc...) asparagine). The BIG2 domain occupies 1078-1151 (FPPFRLMPRK…VQAVDAETGK (74 aa)). Residues 1809-1829 (VMFFTLFALLAGTAVMIIAYH) form a helical membrane-spanning segment. At 1830-1887 (TVCTPRDLAVPAALTPRASPGHSPHYFAASSPTSPNALPPARKASPPSGLWSPAYASH) the chain is on the cytoplasmic side. The residue at position 1844 (threonine 1844) is a Phosphothreonine. A disordered region spans residues 1853–1887 (PHYFAASSPTSPNALPPARKASPPSGLWSPAYASH). Phosphoserine occurs at positions 1874, 1877, 1881, and 1886.

This sequence belongs to the NUP210 family. In terms of assembly, forms dimers and possibly higher-order oligomers. Post-translationally, N-glycosylated, but not all potential glycosylation sites may be used. Contains high-mannose type oligosaccharides. Phosphorylated at Ser-1881 in mitosis specifically; not phosphorylated in interphase. Ubiquitous expression, with highest levels in lung, liver, pancreas, testis, and ovary, intermediate levels in brain, kidney, and spleen, and lowest levels in heart and skeletal muscle.

It localises to the nucleus. Its subcellular location is the nuclear pore complex. It is found in the nucleus membrane. The protein resides in the endoplasmic reticulum membrane. Nucleoporin essential for nuclear pore assembly and fusion, nuclear pore spacing, as well as structural integrity. The polypeptide is Nuclear pore membrane glycoprotein 210 (NUP210) (Homo sapiens (Human)).